The primary structure comprises 663 residues: Dual specificity protein phosphatase 8 (663 aa).

The 116-residue stretch at 23-138 (GPGGPLVIDS…FSSCFPGLCE (116 aa)) folds into the Rhodanese domain. A Tyrosine-protein phosphatase domain is found at 160 to 302 (GLTRILPHLY…LLEYERSLKL (143 aa)). Catalysis depends on Cys-246, which acts as the Phosphocysteine intermediate. Disordered stretches follow at residues 313–367 (LGTP…STAP) and 404–624 (YAPS…FKRR). Composition is skewed to low complexity over residues 334 to 353 (STSESAATGSEAATAAREGS), 427 to 448 (LDSPSGGTLGLPSPSPDSPDSV), and 546 to 557 (SAGAPGPGNSSS). Positions 558 to 577 (SGGGGGGGGGGGGGGGGGGS) are enriched in gly residues. Low complexity predominate over residues 578–600 (SSSNSSSSSSSSSSSSSSSSSSS).

This sequence belongs to the protein-tyrosine phosphatase family. Non-receptor class dual specificity subfamily. As to quaternary structure, monomer. In terms of tissue distribution, expressed predominantly in brain and lung.

The protein localises to the cytoplasm. It localises to the nucleus. It catalyses the reaction O-phospho-L-tyrosyl-[protein] + H2O = L-tyrosyl-[protein] + phosphate. The catalysed reaction is O-phospho-L-seryl-[protein] + H2O = L-seryl-[protein] + phosphate. The enzyme catalyses O-phospho-L-threonyl-[protein] + H2O = L-threonyl-[protein] + phosphate. In terms of biological role, has phosphatase activity with synthetic phosphatase substrates and negatively regulates mitogen-activated protein kinase activity, presumably by catalysing their dephosphorylation. Expected to display protein phosphatase activity toward phosphotyrosine, phosphoserine and phosphothreonine residues. The chain is Dual specificity protein phosphatase 8 (Dusp8) from Mus musculus (Mouse).